A 114-amino-acid chain; its full sequence is Tyrosine-protein phosphatase 13 (114 aa).

In terms of domain architecture, Tyrosine-protein phosphatase spans 1–114 (WRMLWEHNST…QFGQEGPITI (114 aa)). Substrate is bound at residue Glu-82.

This sequence belongs to the protein-tyrosine phosphatase family.

The catalysed reaction is O-phospho-L-tyrosyl-[protein] + H2O = L-tyrosyl-[protein] + phosphate. The sequence is that of Tyrosine-protein phosphatase 13 (STY-13) from Styela plicata (Wrinkled sea squirt).